An 80-amino-acid polypeptide reads, in one-letter code: uncharacterized protein (80 aa).

Residues 1 to 20 form the signal peptide; that stretch reads MVAADHRALGSNKSYPASQT. A disordered region spans residues 1 to 21; sequence MVAADHRALGSNKSYPASQTA. A compositionally biased stretch (polar residues) spans 11–21; sequence SNKSYPASQTA.

This is an uncharacterized protein from Mycobacterium tuberculosis (strain CDC 1551 / Oshkosh).